The sequence spans 425 residues: Aspartic protease 2 (425 aa).

Positions 1 to 16 (MRSILVLVALIGCIAA) are cleaved as a signal peptide. Residues 72–421 (YLGEITIGTP…DIEKKRIGFA (350 aa)) form the Peptidase A1 domain. Residue aspartate 90 is part of the active site. Cysteine 103 and cysteine 145 are disulfide-bonded. Residues asparagine 163, asparagine 197, and asparagine 304 are each glycosylated (N-linked (GlcNAc...) asparagine). Residue aspartate 316 is part of the active site. The cysteines at positions 351 and 382 are disulfide-linked. N-linked (GlcNAc...) asparagine glycosylation is found at asparagine 354 and asparagine 365.

It belongs to the peptidase A1 family. In terms of processing, cleaved into a mature form. As to expression, expressed in intestine, amphidal glands and excretory gland (at protein level).

The protein localises to the secreted. Inhibited by pepstatin A. Functionally, aspartic protease which cleaves several human serum proteins including hemoglobin, fibrinogen and albumin. Appears to cleave preferentially between P1 (Ala, Leu, Val, Phe and Gly) and P1' (Ala and Leu) residues. The chain is Aspartic protease 2 from Necator americanus (Human hookworm).